A 226-amino-acid chain; its full sequence is UPF0758 protein gbs1168 (226 aa).

The 123-residue stretch at 103–225 folds into the MPN domain; sequence QILSSEQLAR…YYSFREEADI (123 aa). Zn(2+) contacts are provided by H174, H176, and D187. The JAMM motif motif lies at 174–187; it reads HNHPSGSPNPSESD.

It belongs to the UPF0758 family.

The protein is UPF0758 protein gbs1168 of Streptococcus agalactiae serotype III (strain NEM316).